A 676-amino-acid chain; its full sequence is Protein kinase C delta type (676 aa).

The 106-residue stretch at methionine 1–leucine 106 folds into the C2 domain. Phosphothreonine is present on residues threonine 43 and threonine 50. Tyrosine 64 carries the phosphotyrosine modification. The residue at position 130 (serine 130) is a Phosphoserine. Residue threonine 141 is modified to Phosphothreonine. A Phosphotyrosine modification is found at tyrosine 155. The Phorbol-ester/DAG-type 1 zinc-finger motif lies at asparagine 158–cysteine 208. Phosphothreonine is present on threonine 218. The Phorbol-ester/DAG-type 2 zinc-finger motif lies at proline 230–cysteine 280. 3 positions are modified to phosphoserine; by autocatalysis: serine 299, serine 302, and serine 304. A Phosphoserine modification is found at serine 307. The residue at position 313 (tyrosine 313) is a Phosphotyrosine. Tyrosine 334 carries the phosphotyrosine; by SRC modification. The Protein kinase domain maps to phenylalanine 349 to phenylalanine 603. Leucine 355–valine 363 provides a ligand contact to ATP. Tyrosine 374 bears the Phosphotyrosine mark. Residue lysine 378 coordinates ATP. Threonine 451 carries the phosphothreonine modification. Aspartate 473 serves as the catalytic Proton acceptor. Phosphoserine occurs at positions 503 and 506. A Phosphothreonine; by autocatalysis modification is found at threonine 507. At tyrosine 567 the chain carries Phosphotyrosine. In terms of domain architecture, AGC-kinase C-terminal spans lysine 604–glutamate 675. Phosphoserine is present on residues serine 645, serine 654, serine 658, and serine 664.

The protein belongs to the protein kinase superfamily. AGC Ser/Thr protein kinase family. PKC subfamily. As to quaternary structure, interacts with PDPK1 (via N-terminal region). Interacts with RAD9A. Interacts with CDCP1. Interacts with MUC1. Interacts with VASP. Interacts with CAVIN3. Interacts with PRKD2 (via N-terminus and zing-finger domain 1 and 2) in response to oxidative stress; the interaction is independent of PRKD2 tyrosine phosphorylation. Interacts with PLSC3; interaction is enhanced by UV irradiation. Interacts with PRKCH upstream open reading frame 2; the interaction leads to inhibition of kinase activity. In terms of processing, autophosphorylated and/or phosphorylated at Thr-507, within the activation loop; phosphorylation at Thr-507 is not a prerequisite for enzymatic activity. Autophosphorylated at Ser-299, Ser-302 and Ser-304. Upon TNFSF10/TRAIL treatment, phosphorylated at Tyr-155; phosphorylation is required for its translocation to the endoplasmic reticulum and cleavage by caspase-3. Phosphorylated at Tyr-313, Tyr-334 and Tyr-567; phosphorylation of Tyr-313 and Tyr-567 following thrombin or zymosan stimulation potentiates its kinase activity. Phosphorylated by protein kinase PDPK1; phosphorylation is inhibited by the apoptotic C-terminal cleavage product of PKN2. Phosphorylated at Tyr-313 through a SYK and SRC mechanism downstream of C-type lectin receptors activation, promoting its activation. Post-translationally, proteolytically cleaved into a catalytic subunit and a regulatory subunit by caspase-3 during apoptosis which results in kinase activation.

Its subcellular location is the cytoplasm. The protein localises to the perinuclear region. It is found in the nucleus. The protein resides in the cell membrane. It localises to the mitochondrion. Its subcellular location is the endomembrane system. It carries out the reaction L-seryl-[protein] + ATP = O-phospho-L-seryl-[protein] + ADP + H(+). The enzyme catalyses L-threonyl-[protein] + ATP = O-phospho-L-threonyl-[protein] + ADP + H(+). The catalysed reaction is L-tyrosyl-[protein] + ATP = O-phospho-L-tyrosyl-[protein] + ADP + H(+). Its activity is regulated as follows. Novel PKCs (PRKCD, PRKCE, PRKCH and PRKCQ) are calcium-insensitive, but activated by diacylglycerol (DAG) and phosphatidylserine. Three specific sites; Thr-507 (activation loop of the kinase domain), Ser-645 (turn motif) and Ser-664 (hydrophobic region), need to be phosphorylated for its full activation. Activated by caspase-3 (CASP3) cleavage during apoptosis. After cleavage, the pseudosubstrate motif in the regulatory subunit is released from the substrate recognition site of the catalytic subunit, which enables PRKCD to become constitutively activated. The catalytic subunit which displays properties of a sphingosine-dependent protein kinase is activated by D-erythro-sphingosine (Sph) or N,N-dimethyl-D-erythrosphingosine (DMS) or N,N,N-trimethyl-D-erythrosphingosine (TMS), but not by ceramide or Sph-1-P and is strongly inhibited by phosphatidylserine. Inhibited by PRKCH upstream open reading frame 2. Its function is as follows. Calcium-independent, phospholipid- and diacylglycerol (DAG)-dependent serine/threonine-protein kinase that plays contrasting roles in cell death and cell survival by functioning as a pro-apoptotic protein during DNA damage-induced apoptosis, but acting as an anti-apoptotic protein during cytokine receptor-initiated cell death, is involved in tumor suppression as well as survival of several cancers, is required for oxygen radical production by NADPH oxidase and acts as positive or negative regulator in platelet functional responses. Negatively regulates B cell proliferation and also has an important function in self-antigen induced B cell tolerance induction. Upon DNA damage, activates the promoter of the death-promoting transcription factor BCLAF1/Btf to trigger BCLAF1-mediated p53/TP53 gene transcription and apoptosis. In response to oxidative stress, interact with and activate CHUK/IKKA in the nucleus, causing the phosphorylation of p53/TP53. In the case of ER stress or DNA damage-induced apoptosis, can form a complex with the tyrosine-protein kinase ABL1 which trigger apoptosis independently of p53/TP53. In cytosol can trigger apoptosis by activating MAPK11 or MAPK14, inhibiting AKT1 and decreasing the level of X-linked inhibitor of apoptosis protein (XIAP), whereas in nucleus induces apoptosis via the activation of MAPK8 or MAPK9. Upon ionizing radiation treatment, is required for the activation of the apoptosis regulators BAX and BAK, which trigger the mitochondrial cell death pathway. Can phosphorylate MCL1 and target it for degradation which is sufficient to trigger for BAX activation and apoptosis. Is required for the control of cell cycle progression both at G1/S and G2/M phases. Mediates phorbol 12-myristate 13-acetate (PMA)-induced inhibition of cell cycle progression at G1/S phase by up-regulating the CDK inhibitor CDKN1A/p21 and inhibiting the cyclin CCNA2 promoter activity. In response to UV irradiation can phosphorylate CDK1, which is important for the G2/M DNA damage checkpoint activation. Can protect glioma cells from the apoptosis induced by TNFSF10/TRAIL, probably by inducing increased phosphorylation and subsequent activation of AKT1. Is highly expressed in a number of cancer cells and promotes cell survival and resistance against chemotherapeutic drugs by inducing cyclin D1 (CCND1) and hyperphosphorylation of RB1, and via several pro-survival pathways, including NF-kappa-B, AKT1 and MAPK1/3 (ERK1/2). Involved in antifungal immunity by mediating phosphorylation and activation of CARD9 downstream of C-type lectin receptors activation, promoting interaction between CARD9 and BCL10, followed by activation of NF-kappa-B and MAP kinase p38 pathways. Can also act as tumor suppressor upon mitogenic stimulation with PMA or TPA. In N-formyl-methionyl-leucyl-phenylalanine (fMLP)-treated cells, is required for NCF1 (p47-phox) phosphorylation and activation of NADPH oxidase activity, and regulates TNF-elicited superoxide anion production in neutrophils, by direct phosphorylation and activation of NCF1 or indirectly through MAPK1/3 (ERK1/2) signaling pathways. May also play a role in the regulation of NADPH oxidase activity in eosinophil after stimulation with IL5, leukotriene B4 or PMA. In collagen-induced platelet aggregation, acts a negative regulator of filopodia formation and actin polymerization by interacting with and negatively regulating VASP phosphorylation. Downstream of PAR1, PAR4 and CD36/GP4 receptors, regulates differentially platelet dense granule secretion; acts as a positive regulator in PAR-mediated granule secretion, whereas it negatively regulates CD36/GP4-mediated granule release. Phosphorylates MUC1 in the C-terminal and regulates the interaction between MUC1 and beta-catenin. The catalytic subunit phosphorylates 14-3-3 proteins (YWHAB, YWHAZ and YWHAH) in a sphingosine-dependent fashion. Phosphorylates ELAVL1 in response to angiotensin-2 treatment. Phosphorylates mitochondrial phospholipid scramblase 3 (PLSCR3), resulting in increased cardiolipin expression on the mitochondrial outer membrane which facilitates apoptosis. Phosphorylates SMPD1 which induces SMPD1 secretion. The polypeptide is Protein kinase C delta type (Homo sapiens (Human)).